Here is a 528-residue protein sequence, read N- to C-terminus: Equilibrative nucleoside transporter 4 (528 aa).

At 1–68 (MGSIGSQRLK…EEPVPDDRYH (68 aa)) the chain is on the extracellular side. The chain crosses the membrane as a helical span at residues 69–89 (AIYFAMLLAGVGFLLPYNSFI). The Cytoplasmic portion of the chain corresponds to 90–101 (TDVDYLHHKYPG). Residues 102-122 (TSIVFDMSLTYILVALAAVLL) form a helical membrane-spanning segment. Over 123–139 (NNVVVERLNLHTRITTG) the chain is Extracellular. Residues 140-160 (YLLALGPLLFISICDVWLQLF) traverse the membrane as a helical segment. The Cytoplasmic portion of the chain corresponds to 161 to 166 (SHDQAY). Residues 167–187 (AINLAAVGTVAFGCTVQQSSF) form a helical membrane-spanning segment. Over 188–231 (YGYTGLLPKRYTQGVMTGESTAGVMISLSRILTKLLLPDERAST) the chain is Extracellular. Residues 232–252 (IIFFLVSAGLELLCFLLHLLV) traverse the membrane as a helical segment. Topologically, residues 253 to 346 (RRSRFVLYYT…LLLHRYVVAR (94 aa)) are cytoplasmic. Residues 347 to 367 (VIWADMLSIAVTYFITLCLFP) form a helical membrane-spanning segment. The Extracellular segment spans residues 368–376 (GLESEIRHC). A helical transmembrane segment spans residues 377-397 (VLGEWLPILVMAVFNLSDFVG). The Cytoplasmic portion of the chain corresponds to 398–411 (KILAALPVEWRGTH). The helical transmembrane segment at 412 to 432 (LLACSCLRVVFIPLFILCVYP) threads the bilayer. The Extracellular portion of the chain corresponds to 433-445 (SGMPALRHPAWPC). A helical membrane pass occupies residues 446 to 466 (VFSLLMGISNGYFGSVPMILA). Residues 467–481 (AGKVSPKQRELAGNT) lie on the Cytoplasmic side of the membrane. The chain crosses the membrane as a helical span at residues 482–504 (MTVSYMSGLTLGSAVAYCTYSLT). At 505-528 (RDAHGSCFQTATAAAANDSIPVGP) the chain is on the extracellular side. Asparagine 521 is a glycosylation site (N-linked (GlcNAc...) asparagine).

Belongs to the SLC29A/ENT transporter (TC 2.A.57) family. In terms of processing, N-glycosylated. In terms of tissue distribution, expressed in heart. Expressed in choroid plexus.

The protein resides in the cell membrane. It is found in the apical cell membrane. It carries out the reaction serotonin(out) = serotonin(in). It catalyses the reaction dopamine(out) = dopamine(in). The enzyme catalyses (R)-noradrenaline(out) = (R)-noradrenaline(in). The catalysed reaction is (R)-adrenaline(out) = (R)-adrenaline(in). It carries out the reaction histamine(out) = histamine(in). It catalyses the reaction tyramine(in) = tyramine(out). The enzyme catalyses guanidine(out) = guanidine(in). The catalysed reaction is adenine(out) = adenine(in). It carries out the reaction adenosine(in) = adenosine(out). Activated at acidic pH. Functionally, electrogenic voltage-dependent transporter that mediates the transport of a variety of endogenous bioactive amines, cationic xenobiotics and drugs. Utilizes the physiologic inside-negative membrane potential as a driving force to facilitate cellular uptake of organic cations. Functions as a Na(+)- and Cl(-)-independent bidirectional transporter. Substrate transport is pH-dependent and enhanced under acidic condition, which is most likely the result of allosteric changes in the transporter structure. Implicated in monoamine neurotransmitters uptake such as serotonin, dopamine, adrenaline/epinephrine, noradrenaline/norepinephrine, histamine and tyramine, thereby supporting a role in homeostatic regulation of aminergic neurotransmission in the central nervous system. Also responsible for the uptake of bioactive amines and drugs through the blood-cerebrospinal fluid (CSF) barrier, from the CSF into choroid plexus epithelial cells, thereby playing a significant role in the clearance of cationic neurotoxins, xenobiotics and metabolic waste in the brain. Involved in bidirectional transport of the purine nucleoside adenosine and plays a role in the regulation of extracellular adenosine concentrations in cardiac tissues, in particular during ischemia. May be involved in organic cation uptake from the tubular lumen into renal tubular cells, thereby contributing to organic cation reabsorption in the kidney. Also transports adenine and guanidine. This chain is Equilibrative nucleoside transporter 4, found in Mus musculus (Mouse).